The primary structure comprises 468 residues: Mannan endo-1,4-beta-mannosidase 3 (468 aa).

The N-terminal stretch at 1 to 23 (MTVRPRPAAAAIIIAAVFGAAAA) is a signal peptide. Position 86 (Trp86) interacts with substrate. Asn152 carries an N-linked (GlcNAc...) asparagine glycan. Asn201 provides a ligand contact to substrate. Glu202 serves as the catalytic Proton donor. Tyr281 lines the substrate pocket. Asn300 is a glycosylation site (N-linked (GlcNAc...) asparagine). Glu321 acts as the Nucleophile in catalysis. Asn333 is a glycosylation site (N-linked (GlcNAc...) asparagine). Positions 364 and 371 each coordinate substrate. Residues 415–436 (LRRRRRRPASSHRKTRLGSGGD) form a disordered region. Residues 416-430 (RRRRRRPASSHRKTR) show a composition bias toward basic residues.

Belongs to the glycosyl hydrolase 5 (cellulase A) family. Expressed in seeds.

The protein localises to the secreted. The catalysed reaction is Random hydrolysis of (1-&gt;4)-beta-D-mannosidic linkages in mannans, galactomannans and glucomannans.. In Oryza sativa subsp. japonica (Rice), this protein is Mannan endo-1,4-beta-mannosidase 3 (MAN3).